Here is a 388-residue protein sequence, read N- to C-terminus: Chorismate synthase (388 aa).

NADP(+) is bound by residues arginine 39 and arginine 45. Residues glutamate 95–lysine 118 form a disordered region. Residues arginine 130 to serine 132, asparagine 251 to alanine 252, glycine 296, lysine 311 to threonine 315, and arginine 337 each bind FMN.

Belongs to the chorismate synthase family. As to quaternary structure, homotetramer. Requires FMNH2 as cofactor.

It catalyses the reaction 5-O-(1-carboxyvinyl)-3-phosphoshikimate = chorismate + phosphate. It functions in the pathway metabolic intermediate biosynthesis; chorismate biosynthesis; chorismate from D-erythrose 4-phosphate and phosphoenolpyruvate: step 7/7. Catalyzes the anti-1,4-elimination of the C-3 phosphate and the C-6 proR hydrogen from 5-enolpyruvylshikimate-3-phosphate (EPSP) to yield chorismate, which is the branch point compound that serves as the starting substrate for the three terminal pathways of aromatic amino acid biosynthesis. This reaction introduces a second double bond into the aromatic ring system. The chain is Chorismate synthase from Listeria innocua serovar 6a (strain ATCC BAA-680 / CLIP 11262).